The following is a 430-amino-acid chain: MKLQKPKGTADLLPAETAKWQYIEEIARGVFNDYNFKEIRTPMFESYELFSRATGETSDIVTKEMYDFEDKGGRHIALRPEGTASAVRAYIENKLYAPEVVKPVKLWYDAPMFRYERPQSGRLRQFHQFGVECLGLKNPAVDVEIIAMADTLFRQLGISGVKLSLNTLGDMESRKAYRQALIDYLTPFENQLSEDSRRRLNENPLRVLDSKEAEDIAIVKNAPAILDYLNETSKAYFEEVKALLEALNIEYTIDSNMVRGLDYYNDTIFEFIVNFDGKELTVCGGGRYDGLVEYFDGPATPAFGFGLGIERLLMIAEKQEINFIPEETLDVYIAVMGEKANLEATKLAESLREQAFKVERDFSNRKLGAQFKTAEKLGAELIITLGEDEVRTGQIKVKHNQTRKQVETTLQAVHESFAPIFEEIYADEIN.

It belongs to the class-II aminoacyl-tRNA synthetase family. Homodimer.

It localises to the cytoplasm. The catalysed reaction is tRNA(His) + L-histidine + ATP = L-histidyl-tRNA(His) + AMP + diphosphate + H(+). The polypeptide is Histidine--tRNA ligase (Lactococcus lactis subsp. cremoris (strain MG1363)).